The primary structure comprises 164 residues: Cytochrome c-type biogenesis protein CcmE (164 aa).

The Cytoplasmic portion of the chain corresponds to Met-1 to Arg-8. Residues Leu-9–Ala-29 form a helical; Signal-anchor for type II membrane protein membrane-spanning segment. At Leu-30–Ser-164 the chain is on the periplasmic side. Residues His-130 and Tyr-134 each contribute to the heme site. Basic and acidic residues predominate over residues Asp-131–Lys-148. A disordered region spans residues Asp-131–Ser-164. Positions Ala-155–Ser-164 are enriched in polar residues.

Belongs to the CcmE/CycJ family.

It is found in the cell inner membrane. Its function is as follows. Heme chaperone required for the biogenesis of c-type cytochromes. Transiently binds heme delivered by CcmC and transfers the heme to apo-cytochromes in a process facilitated by CcmF and CcmH. This chain is Cytochrome c-type biogenesis protein CcmE, found in Serratia proteamaculans (strain 568).